Here is a 457-residue protein sequence, read N- to C-terminus: Embryogenesis-associated protein EMB8 (457 aa).

Positions 39 to 59 (KKPAAGACEEQDELTSGSAAR) are disordered. In terms of domain architecture, AB hydrolase-1 spans 151-391 (PVLILLPGLT…LVVTPNGGHL (241 aa)). Catalysis depends on charge relay system residues Ser-231, Asp-361, and His-390. Basic and acidic residues predominate over residues 438-447 (VDSVHTRETN). The interval 438 to 457 (VDSVHTRETNNYKSPIENVN) is disordered. The span at 448–457 (NYKSPIENVN) shows a compositional bias: polar residues.

This sequence belongs to the AB hydrolase superfamily. AB hydrolase 4 family.

The chain is Embryogenesis-associated protein EMB8 (EMB8) from Picea glauca (White spruce).